Here is a 492-residue protein sequence, read N- to C-terminus: GMP reductase (492 aa).

Residues Ser30–Arg31 and Arg78 contribute to the NADP(+) site. 2 CBS domains span residues Leu99–Thr162 and Met164–Thr223. Residues Asp260–Ala262 and Val313–Gly314 contribute to the NADP(+) site. Gly314, Gly316, and Cys319 together coordinate K(+). Cys319 (thioimidate intermediate) is an active-site residue. Thr321 (proton donor/acceptor) is an active-site residue. A K(+)-binding site is contributed by Arg322. GMP is bound by residues Asp352–Gly354, Gly375–Asn376, and Gly401–Ala403. NADP(+)-binding positions include Met402 and Ser454–Ser457. Positions Ser490–Leu492 match the Microbody targeting signal motif.

The protein belongs to the IMPDH/GMPR family. GuaC type 1 subfamily. Homotetramer.

The protein localises to the glycosome. It carries out the reaction IMP + NH4(+) + NADP(+) = GMP + NADPH + 2 H(+). Its activity is regulated as follows. Activated by GTP and inhibited by ATP and IMP. Mycophenolic acid (MPA) is a competitive inhibitor of the enzyme with respect to NADPH. Its function is as follows. Catalyzes the irreversible NADPH-dependent deamination of GMP to IMP. It functions in the conversion of nucleobase, nucleoside and nucleotide derivatives of G to A nucleotides, and in maintaining the intracellular balance of A and G nucleotides. In Leishmania major, this protein is GMP reductase.